Here is a 181-residue protein sequence, read N- to C-terminus: NADH-quinone oxidoreductase subunit B (181 aa).

Residues cysteine 45, cysteine 46, cysteine 111, and cysteine 140 each contribute to the [4Fe-4S] cluster site.

The protein belongs to the complex I 20 kDa subunit family. As to quaternary structure, NDH-1 is composed of 15 different subunits. Subunits NuoB, C, D, E, F, and G constitute the peripheral sector of the complex. Requires [4Fe-4S] cluster as cofactor.

It is found in the cell membrane. It catalyses the reaction a quinone + NADH + 5 H(+)(in) = a quinol + NAD(+) + 4 H(+)(out). Its function is as follows. NDH-1 shuttles electrons from NADH, via FMN and iron-sulfur (Fe-S) centers, to quinones in the respiratory chain. The immediate electron acceptor for the enzyme in this species is believed to be a menaquinone. Couples the redox reaction to proton translocation (for every two electrons transferred, four hydrogen ions are translocated across the cytoplasmic membrane), and thus conserves the redox energy in a proton gradient. This Deinococcus radiodurans (strain ATCC 13939 / DSM 20539 / JCM 16871 / CCUG 27074 / LMG 4051 / NBRC 15346 / NCIMB 9279 / VKM B-1422 / R1) protein is NADH-quinone oxidoreductase subunit B.